A 378-amino-acid polypeptide reads, in one-letter code: Succinyl-diaminopimelate desuccinylase (378 aa).

His66 provides a ligand contact to Zn(2+). Asp68 is an active-site residue. Position 100 (Asp100) interacts with Zn(2+). Catalysis depends on Glu134, which acts as the Proton acceptor. Positions 135, 163, and 350 each coordinate Zn(2+).

This sequence belongs to the peptidase M20A family. DapE subfamily. Homodimer. Zn(2+) serves as cofactor. Co(2+) is required as a cofactor.

It carries out the reaction N-succinyl-(2S,6S)-2,6-diaminopimelate + H2O = (2S,6S)-2,6-diaminopimelate + succinate. The protein operates within amino-acid biosynthesis; L-lysine biosynthesis via DAP pathway; LL-2,6-diaminopimelate from (S)-tetrahydrodipicolinate (succinylase route): step 3/3. Functionally, catalyzes the hydrolysis of N-succinyl-L,L-diaminopimelic acid (SDAP), forming succinate and LL-2,6-diaminopimelate (DAP), an intermediate involved in the bacterial biosynthesis of lysine and meso-diaminopimelic acid, an essential component of bacterial cell walls. In Hydrogenovibrio crunogenus (strain DSM 25203 / XCL-2) (Thiomicrospira crunogena), this protein is Succinyl-diaminopimelate desuccinylase.